A 336-amino-acid chain; its full sequence is MTLILPKDYHPSLTIRDTEAAIVFIRENFQDKIADKLNLQRMSAPMFVEKSTGLNDNLNGIERPVAFDMKAMPDDTIEVVHSLAKWKRLALKRYGFGMHEGLYTNMNAIRRDEDLDNFHSIYVDQWDWEKIIAKEERNIETLKTTVKQIFKAIKETEKELSARYPGSTYRLPSDITFITTQELEDRWPDLAPEEREDKIAKEKKAVFLMKIGDKLKRSGKPHDGRAPDYDDWELNGDLLFWYEPLKRKIEISSMGIRVSEESLKEQLKKAHTEERSDLPFHKMLLEGKLPYTIGGGIGQSRLCMLLLGKAHIGEVQASIWPPEMIESCKAADIKIL.

It belongs to the class-II aminoacyl-tRNA synthetase family. AsnA subfamily.

The protein localises to the cytoplasm. It catalyses the reaction L-aspartate + NH4(+) + ATP = L-asparagine + AMP + diphosphate + H(+). Its pathway is amino-acid biosynthesis; L-asparagine biosynthesis; L-asparagine from L-aspartate (ammonia route): step 1/1. The protein is Aspartate--ammonia ligase of Lactobacillus johnsonii (strain CNCM I-12250 / La1 / NCC 533).